The chain runs to 664 residues: ATP-dependent RNA helicase MSS116, mitochondrial (664 aa).

Residues 1-26 constitute a mitochondrion transit peptide; it reads MLTSILIKGRTPVLASRNLLAALSNC. The tract at residues 42–79 is disordered; sequence NRDQRNFGRNQRNNNSNRYRNSRFNSRPRTRSREDDDE. The span at 48 to 68 shows a compositional bias: low complexity; that stretch reads FGRNQRNNNSNRYRNSRFNSR. Positions 106–134 match the Q motif motif; the sequence is SLLEEGVLDKEIHKAITRMEFPGLTPVQQ. In terms of domain architecture, Helicase ATP-binding spans 139-326; it reads PILSSEDHDV…NNIMNKKECL (188 aa). ATP is bound at residue 152–159; the sequence is AKTGTGKT. The short motif at 267–270 is the DEAD box element; that stretch reads DEAD. The 158-residue stretch at 355 to 512 folds into the Helicase C-terminal domain; that stretch reads SIFAAVEHIK…EKYEPSEEIK (158 aa). The segment at 602–664 is disordered; it reads GNNKSYDYDD…NYSSRNSNIY (63 aa). Residues 628 to 638 are compositionally biased toward basic and acidic residues; it reads QNRDYDDEPFR. Positions 639-649 are enriched in low complexity; that stretch reads RSNNNRRSFSR. Residues 653–664 are compositionally biased toward polar residues; the sequence is KNNYSSRNSNIY.

This sequence belongs to the DEAD box helicase family. DDX18/HAS1 subfamily.

The protein localises to the mitochondrion matrix. The catalysed reaction is ATP + H2O = ADP + phosphate + H(+). Functionally, ATP-dependent RNA helicase required for mitochondrial splicing of group I and II introns. Specifically involved in the ATP-dependent splicing of the bl1 intron of COB. Also required for efficient mitochondrial translation. This chain is ATP-dependent RNA helicase MSS116, mitochondrial (MSS116), found in Saccharomyces cerevisiae (strain ATCC 204508 / S288c) (Baker's yeast).